A 418-amino-acid polypeptide reads, in one-letter code: Serine hydroxymethyltransferase (418 aa).

(6S)-5,6,7,8-tetrahydrofolate contacts are provided by residues L120 and 124-126 (GHL). At K229 the chain carries N6-(pyridoxal phosphate)lysine. 353–355 (SPF) contributes to the (6S)-5,6,7,8-tetrahydrofolate binding site.

The protein belongs to the SHMT family. As to quaternary structure, homodimer. It depends on pyridoxal 5'-phosphate as a cofactor.

The protein localises to the cytoplasm. It carries out the reaction (6R)-5,10-methylene-5,6,7,8-tetrahydrofolate + glycine + H2O = (6S)-5,6,7,8-tetrahydrofolate + L-serine. Its pathway is one-carbon metabolism; tetrahydrofolate interconversion. It participates in amino-acid biosynthesis; glycine biosynthesis; glycine from L-serine: step 1/1. Catalyzes the reversible interconversion of serine and glycine with tetrahydrofolate (THF) serving as the one-carbon carrier. This reaction serves as the major source of one-carbon groups required for the biosynthesis of purines, thymidylate, methionine, and other important biomolecules. Also exhibits THF-independent aldolase activity toward beta-hydroxyamino acids, producing glycine and aldehydes, via a retro-aldol mechanism. The chain is Serine hydroxymethyltransferase from Psychrobacter cryohalolentis (strain ATCC BAA-1226 / DSM 17306 / VKM B-2378 / K5).